The following is a 130-amino-acid chain: Small ribosomal subunit protein uS9 (130 aa).

The protein belongs to the universal ribosomal protein uS9 family.

This Brevibacillus brevis (strain 47 / JCM 6285 / NBRC 100599) protein is Small ribosomal subunit protein uS9.